The chain runs to 268 residues: Undecaprenyl-diphosphatase (268 aa).

A run of 6 helical transmembrane segments spans residues 39-59 (SETF…LIYK), 75-95 (LPYF…GLWV), 106-126 (LGPV…TEKV), 179-199 (TEFA…FAWI), 214-234 (LTLA…VKWL), and 243-263 (FIPF…LVAL).

The protein belongs to the UppP family.

The protein localises to the cell inner membrane. It catalyses the reaction di-trans,octa-cis-undecaprenyl diphosphate + H2O = di-trans,octa-cis-undecaprenyl phosphate + phosphate + H(+). Functionally, catalyzes the dephosphorylation of undecaprenyl diphosphate (UPP). Confers resistance to bacitracin. The chain is Undecaprenyl-diphosphatase from Methylacidiphilum infernorum (isolate V4) (Methylokorus infernorum (strain V4)).